Consider the following 472-residue polypeptide: Methanethiol oxidase (472 aa).

A2 carries the N-acetylalanine modification. Phosphoserine is present on residues S111 and S467.

The protein belongs to the selenium-binding protein family. In terms of assembly, interacts with USP33. In terms of processing, the N-terminus is blocked. As to expression, highly expressed in liver, kidney and, to a lesser extent, lung.

The protein resides in the nucleus. Its subcellular location is the cytoplasm. The protein localises to the cytosol. It localises to the membrane. The catalysed reaction is methanethiol + O2 + H2O = hydrogen sulfide + formaldehyde + H2O2 + H(+). It functions in the pathway organosulfur degradation. Catalyzes the oxidation of methanethiol, an organosulfur compound known to be produced in substantial amounts by gut bacteria. Selenium-binding protein which may be involved in the sensing of reactive xenobiotics in the cytoplasm. May be involved in intra-Golgi protein transport. The protein is Methanethiol oxidase (Selenbp1) of Mus musculus (Mouse).